The chain runs to 255 residues: tRNA uridine(34) hydroxylase (255 aa).

One can recognise a Rhodanese domain in the interval A131–S225. The active-site Cysteine persulfide intermediate is the C185.

It belongs to the TrhO family.

It catalyses the reaction uridine(34) in tRNA + AH2 + O2 = 5-hydroxyuridine(34) in tRNA + A + H2O. Catalyzes oxygen-dependent 5-hydroxyuridine (ho5U) modification at position 34 in tRNAs. The sequence is that of tRNA uridine(34) hydroxylase from Bradyrhizobium diazoefficiens (strain JCM 10833 / BCRC 13528 / IAM 13628 / NBRC 14792 / USDA 110).